We begin with the raw amino-acid sequence, 714 residues long: Polyribonucleotide nucleotidyltransferase (714 aa).

D487 and D493 together coordinate Mg(2+). In terms of domain architecture, KH spans 554-613 (PRIETLKIPTDKIREVIGTGGKVIREIVEKTGAKINIEDDGTVKVASSDGNSIKAAIAWI). The 69-residue stretch at 623 to 691 (GQIYEGTVVK…DRGKVRLSMR (69 aa)) folds into the S1 motif domain.

This sequence belongs to the polyribonucleotide nucleotidyltransferase family. Requires Mg(2+) as cofactor.

The protein localises to the cytoplasm. It catalyses the reaction RNA(n+1) + phosphate = RNA(n) + a ribonucleoside 5'-diphosphate. In terms of biological role, involved in mRNA degradation. Catalyzes the phosphorolysis of single-stranded polyribonucleotides processively in the 3'- to 5'-direction. The polypeptide is Polyribonucleotide nucleotidyltransferase (Methylocella silvestris (strain DSM 15510 / CIP 108128 / LMG 27833 / NCIMB 13906 / BL2)).